Reading from the N-terminus, the 105-residue chain is Large ribosomal subunit protein uL22 (105 aa).

Belongs to the universal ribosomal protein uL22 family. As to quaternary structure, part of the 50S ribosomal subunit.

Functionally, this protein binds specifically to 23S rRNA; its binding is stimulated by other ribosomal proteins, e.g. L4, L17, and L20. It is important during the early stages of 50S assembly. It makes multiple contacts with different domains of the 23S rRNA in the assembled 50S subunit and ribosome. In terms of biological role, the globular domain of the protein is located near the polypeptide exit tunnel on the outside of the subunit, while an extended beta-hairpin is found that lines the wall of the exit tunnel in the center of the 70S ribosome. The chain is Large ribosomal subunit protein uL22 from Sulfurimonas denitrificans (strain ATCC 33889 / DSM 1251) (Thiomicrospira denitrificans (strain ATCC 33889 / DSM 1251)).